The following is a 312-amino-acid chain: Ornithine carbamoyltransferase (312 aa).

Carbamoyl phosphate contacts are provided by residues 60–63 (STRT), glutamine 87, arginine 111, and 138–141 (HPCQ). L-ornithine-binding positions include asparagine 169, aspartate 229, and 233–234 (SM). Residues 268-269 (CL) and arginine 296 each bind carbamoyl phosphate.

This sequence belongs to the aspartate/ornithine carbamoyltransferase superfamily. OTCase family.

Its subcellular location is the cytoplasm. It carries out the reaction carbamoyl phosphate + L-ornithine = L-citrulline + phosphate + H(+). Its pathway is amino-acid biosynthesis; L-arginine biosynthesis; L-arginine from L-ornithine and carbamoyl phosphate: step 1/3. Functionally, reversibly catalyzes the transfer of the carbamoyl group from carbamoyl phosphate (CP) to the N(epsilon) atom of ornithine (ORN) to produce L-citrulline. This chain is Ornithine carbamoyltransferase, found in Rhodopseudomonas palustris (strain BisA53).